Here is a 418-residue protein sequence, read N- to C-terminus: Bifunctional enzyme IspD/IspF (418 aa).

The interval 1–261 (MADTPALIPQ…EFKRASDMNF (261 aa)) is 2-C-methyl-D-erythritol 4-phosphate cytidylyltransferase. A 2-C-methyl-D-erythritol 2,4-cyclodiphosphate synthase region spans residues 262–418 (RIGEGWDIHA…RATVLLRKFI (157 aa)). D268 and H270 together coordinate a divalent metal cation. 4-CDP-2-C-methyl-D-erythritol 2-phosphate is bound by residues 268–270 (DIH) and 294–295 (HS). A divalent metal cation is bound at residue H302. Residues 316–318 (DIG) and 321–325 (FPDTD) contribute to the 4-CDP-2-C-methyl-D-erythritol 2-phosphate site.

This sequence in the N-terminal section; belongs to the IspD/TarI cytidylyltransferase family. IspD subfamily. The protein in the C-terminal section; belongs to the IspF family. A divalent metal cation serves as cofactor.

It carries out the reaction 2-C-methyl-D-erythritol 4-phosphate + CTP + H(+) = 4-CDP-2-C-methyl-D-erythritol + diphosphate. The catalysed reaction is 4-CDP-2-C-methyl-D-erythritol 2-phosphate = 2-C-methyl-D-erythritol 2,4-cyclic diphosphate + CMP. The protein operates within isoprenoid biosynthesis; isopentenyl diphosphate biosynthesis via DXP pathway; isopentenyl diphosphate from 1-deoxy-D-xylulose 5-phosphate: step 2/6. It participates in isoprenoid biosynthesis; isopentenyl diphosphate biosynthesis via DXP pathway; isopentenyl diphosphate from 1-deoxy-D-xylulose 5-phosphate: step 4/6. Its function is as follows. Bifunctional enzyme that catalyzes the formation of 4-diphosphocytidyl-2-C-methyl-D-erythritol from CTP and 2-C-methyl-D-erythritol 4-phosphate (MEP) (IspD), and catalyzes the conversion of 4-diphosphocytidyl-2-C-methyl-D-erythritol 2-phosphate (CDP-ME2P) to 2-C-methyl-D-erythritol 2,4-cyclodiphosphate (ME-CPP) with a corresponding release of cytidine 5-monophosphate (CMP) (IspF). This is Bifunctional enzyme IspD/IspF from Albidiferax ferrireducens (strain ATCC BAA-621 / DSM 15236 / T118) (Rhodoferax ferrireducens).